The sequence spans 662 residues: Tubulin--tyrosine ligase-like protein 12 (662 aa).

The TTL domain occupies 324–660; sequence LKKRKIKVYA…LDEIDPTKVT (337 aa). Residues 472–475, Lys-491, and Asp-493 contribute to the ATP site; that span reads CEYI.

It belongs to the tubulin--tyrosine ligase family.

In terms of biological role, regulates microtubule dynamics in uterine muscle cells. The polypeptide is Tubulin--tyrosine ligase-like protein 12 (Caenorhabditis elegans).